The primary structure comprises 746 residues: MFFLLALLTELGRLQAHVGSEGIFLHVTVPRKILSNDSEVSERKMIYIITIDGQPYTLHLRKQSFLPQNFLVYTYNEAGSLHSESPYFMMHCHYQGYAAEFPNSFVTLSICSGLRGFLQFENVSYGIEPLESSARFEHIIYQMKNNDPNVSILAENYSHIWQKDQSYKVPLNSQKKNLSKLLPQYLEIYIIVEKALYDYMGSEMMAVTQKIVQVIGLVNTMFTQFRLTVTLSSLELWSNENQISTSGDADDILQRFLAWKRDYLILRPHDIAYLLVYRKHPKYVGATFPGTICNESYDAGIAMYPDAIDLEGFSVIIAQLLGLNVGLTYDDITQCFCLRATCIMNHEAMSARGIKIFSNCSMHDYRYFVSKFEAKCLQKLSNLQPLHQNQPVCGNGILESNEECDCGNKKECQFKKCCDYNTCKLKGSVKCGSGPCCTSKCELSIVGTPCRKSVDPECDFTEYCNGTSSDCVPDTYALNGHLCKLGTAYCYNGQCQTTDNQCAKIFGKGAQGAPFACFKEVNSLHETSENCGFKNSQPLPCERKDVLCGKLACVQPHKNAYKSDIQYTVYSYIQDHVCVSIATGSSMRSDGTDNAYVADGTMCGPEMYCVNKTCRKVHLTGYNCNTTTKCKGKGICNNFGNCQCFPGHKPPDCKFQFGSPGGSIDDGNFQKSDEFYTEKGYNAHWNNWFILSFYIVLPFFIIFTIVIFKRNEIRKLCNRENTELIHPLYQKAMMWNINIAQNFRSK.

Positions 1–16 (MFFLLALLTELGRLQA) are cleaved as a signal peptide. Residues 17–183 (HVGSEGIFLH…QKKNLSKLLP (167 aa)) constitute a propeptide that is removed on maturation. Residues asparagine 36, asparagine 122, asparagine 149, asparagine 156, asparagine 177, and asparagine 294 are each glycosylated (N-linked (GlcNAc...) asparagine). The Extracellular segment spans residues 177–687 (NLSKLLPQYL…EKGYNAHWNN (511 aa)). The Peptidase M12B domain occupies 184–381 (QYLEIYIIVE…FEAKCLQKLS (198 aa)). 4 cysteine pairs are disulfide-bonded: cysteine 293–cysteine 376, cysteine 335–cysteine 360, cysteine 337–cysteine 342, and cysteine 450–cysteine 471. Asparagine 359, asparagine 465, asparagine 611, and asparagine 625 each carry an N-linked (GlcNAc...) asparagine glycan. In terms of domain architecture, Disintegrin spans 390–479 (QPVCGNGILE…DCVPDTYALN (90 aa)). Residues 620 to 654 (TGYNCNTTTKCKGKGICNNFGNCQCFPGHKPPDCK) enclose the EGF-like domain. Cystine bridges form between cysteine 624/cysteine 636, cysteine 630/cysteine 642, and cysteine 644/cysteine 653. Residues 688–708 (WFILSFYIVLPFFIIFTIVIF) traverse the membrane as a helical segment. Residues 709-746 (KRNEIRKLCNRENTELIHPLYQKAMMWNINIAQNFRSK) are Cytoplasmic-facing.

Post-translationally, the prodomain and the metalloprotease-like domain are cleaved during the epididymal maturation of the spermatozoa. Expressed predominantly in adult and prepubertal testis.

It is found in the membrane. Sperm surface membrane protein that may be involved in spermatogenesis and fertilization. This is a non catalytic metalloprotease-like protein. This chain is Disintegrin and metalloproteinase domain-containing protein 18 (ADAM18), found in Macaca fascicularis (Crab-eating macaque).